We begin with the raw amino-acid sequence, 261 residues long: Cytochrome c oxidase subunit 3 (261 aa).

The Mitochondrial matrix segment spans residues 2–15; sequence THQTHAYHMVNPSP. A helical transmembrane segment spans residues 16 to 34; the sequence is WPLTGALSALLLTSGLVMW. Residues 35-40 lie on the Mitochondrial intermembrane side of the membrane; sequence FHYNST. Residues 41 to 66 form a helical membrane-spanning segment; the sequence is ILLSLGLLTNILTMYQWWRDIIREGT. Residues 67 to 72 are Mitochondrial matrix-facing; sequence YQGHHT. A helical membrane pass occupies residues 73-105; the sequence is PIVQKGLRYGMILFIVSEVFFFAGFFWAFYHSS. Topologically, residues 106 to 128 are mitochondrial intermembrane; that stretch reads LVPTHDLGGCWPPTGITPLNPLE. Residues 129 to 152 traverse the membrane as a helical segment; that stretch reads VPLLNTSVLLASGVSITWAHHSLM. The Mitochondrial matrix segment spans residues 153–155; the sequence is EGN. A helical membrane pass occupies residues 156 to 183; it reads RNHMNQALLITILLGLYFTILQASEYFE. The Mitochondrial intermembrane segment spans residues 184–190; that stretch reads TSFSISD. Residues 191 to 223 form a helical membrane-spanning segment; it reads GIYGSTFFMATGFHGLHVIIGSTFLIVCLLRQL. Residues 224 to 232 lie on the Mitochondrial matrix side of the membrane; that stretch reads KFHFTSKHH. Residues 233 to 256 traverse the membrane as a helical segment; sequence FGFEAAAWYWHFVDVVWLFLYVSI. The Mitochondrial intermembrane portion of the chain corresponds to 257–261; the sequence is YWWGS.

The protein belongs to the cytochrome c oxidase subunit 3 family. As to quaternary structure, component of the cytochrome c oxidase (complex IV, CIV), a multisubunit enzyme composed of 14 subunits. The complex is composed of a catalytic core of 3 subunits MT-CO1, MT-CO2 and MT-CO3, encoded in the mitochondrial DNA, and 11 supernumerary subunits COX4I, COX5A, COX5B, COX6A, COX6B, COX6C, COX7A, COX7B, COX7C, COX8 and NDUFA4, which are encoded in the nuclear genome. The complex exists as a monomer or a dimer and forms supercomplexes (SCs) in the inner mitochondrial membrane with NADH-ubiquinone oxidoreductase (complex I, CI) and ubiquinol-cytochrome c oxidoreductase (cytochrome b-c1 complex, complex III, CIII), resulting in different assemblies (supercomplex SCI(1)III(2)IV(1) and megacomplex MCI(2)III(2)IV(2)).

It is found in the mitochondrion inner membrane. It carries out the reaction 4 Fe(II)-[cytochrome c] + O2 + 8 H(+)(in) = 4 Fe(III)-[cytochrome c] + 2 H2O + 4 H(+)(out). In terms of biological role, component of the cytochrome c oxidase, the last enzyme in the mitochondrial electron transport chain which drives oxidative phosphorylation. The respiratory chain contains 3 multisubunit complexes succinate dehydrogenase (complex II, CII), ubiquinol-cytochrome c oxidoreductase (cytochrome b-c1 complex, complex III, CIII) and cytochrome c oxidase (complex IV, CIV), that cooperate to transfer electrons derived from NADH and succinate to molecular oxygen, creating an electrochemical gradient over the inner membrane that drives transmembrane transport and the ATP synthase. Cytochrome c oxidase is the component of the respiratory chain that catalyzes the reduction of oxygen to water. Electrons originating from reduced cytochrome c in the intermembrane space (IMS) are transferred via the dinuclear copper A center (CU(A)) of subunit 2 and heme A of subunit 1 to the active site in subunit 1, a binuclear center (BNC) formed by heme A3 and copper B (CU(B)). The BNC reduces molecular oxygen to 2 water molecules using 4 electrons from cytochrome c in the IMS and 4 protons from the mitochondrial matrix. The polypeptide is Cytochrome c oxidase subunit 3 (Rattus norvegicus (Rat)).